A 183-amino-acid chain; its full sequence is NADH-ubiquinone oxidoreductase chain 5 (183 aa).

Transmembrane regions (helical) follow at residues F7–S27, L30–T50, A111–G131, and T144–A164.

Belongs to the complex I subunit 5 family.

Its subcellular location is the mitochondrion inner membrane. The enzyme catalyses a ubiquinone + NADH + 5 H(+)(in) = a ubiquinol + NAD(+) + 4 H(+)(out). Its function is as follows. Core subunit of the mitochondrial membrane respiratory chain NADH dehydrogenase (Complex I) that is believed to belong to the minimal assembly required for catalysis. Complex I functions in the transfer of electrons from NADH to the respiratory chain. The immediate electron acceptor for the enzyme is believed to be ubiquinone. This is NADH-ubiquinone oxidoreductase chain 5 (NDH5) from Pisum sativum (Garden pea).